A 700-amino-acid polypeptide reads, in one-letter code: Elongation factor G (700 aa).

Residues 10–286 (SKVRNIGIMA…AVIDYLPSPL (277 aa)) form the tr-type G domain. GTP is bound by residues 19 to 26 (AHIDAGKT), 83 to 87 (DTPGH), and 137 to 140 (NKMD).

This sequence belongs to the TRAFAC class translation factor GTPase superfamily. Classic translation factor GTPase family. EF-G/EF-2 subfamily.

Its subcellular location is the cytoplasm. Its function is as follows. Catalyzes the GTP-dependent ribosomal translocation step during translation elongation. During this step, the ribosome changes from the pre-translocational (PRE) to the post-translocational (POST) state as the newly formed A-site-bound peptidyl-tRNA and P-site-bound deacylated tRNA move to the P and E sites, respectively. Catalyzes the coordinated movement of the two tRNA molecules, the mRNA and conformational changes in the ribosome. In Mycolicibacterium gilvum (strain PYR-GCK) (Mycobacterium gilvum (strain PYR-GCK)), this protein is Elongation factor G.